Here is a 591-residue protein sequence, read N- to C-terminus: CTP synthase 1 (591 aa).

In terms of domain architecture, Glutamine amidotransferase type-1 spans 300 to 554 (SIALVGKYTK…LAAAGRLQSY (255 aa)). Active-site for GATase activity residues include cysteine 399, histidine 526, and glutamate 528. Residues serine 571 and serine 575 each carry the phosphoserine modification.

The protein belongs to the CTP synthase family.

It catalyses the reaction UTP + L-glutamine + ATP + H2O = CTP + L-glutamate + ADP + phosphate + 2 H(+). Its pathway is pyrimidine metabolism; CTP biosynthesis via de novo pathway; CTP from UDP: step 2/2. This enzyme is involved in the de novo synthesis of CTP, a precursor of DNA, RNA and phospholipids. Catalyzes the ATP-dependent amination of UTP to CTP with either L-glutamine or ammonia as a source of nitrogen. The sequence is that of CTP synthase 1 (ctps1) from Danio rerio (Zebrafish).